A 553-amino-acid chain; its full sequence is uncharacterized protein (553 aa).

An N-terminal signal peptide occupies residues 1 to 28 (MRYARHASRYSLFTLAVSAALLPGAGWA).

This is an uncharacterized protein from Pseudomonas aeruginosa (strain ATCC 15692 / DSM 22644 / CIP 104116 / JCM 14847 / LMG 12228 / 1C / PRS 101 / PAO1).